Reading from the N-terminus, the 1010-residue chain is Protein CROWDED NUCLEI 4 (1010 aa).

Coiled-coil stretches lie at residues 82–350 (LLLL…LIQN) and 404–763 (EKEH…NLER). Short sequence motifs (nuclear localization signal) lie at residues 445-452 (NRKTTMLE) and 679-686 (LKRLDAER). Disordered stretches follow at residues 787 to 813 (GVST…PSSA), 839 to 937 (HYEE…TQTP), and 966 to 994 (DCSE…GINA). Over residues 849–863 (EKLKLESSRREEKAY) the composition is skewed to basic and acidic residues. Polar residues-rich tracts occupy residues 883-893 (NTSGDETSEPS) and 912-921 (TQSVISSPQN).

The protein belongs to the CRWN family. In terms of assembly, core component of the LINC complex which is composed of inner nuclear membrane SUN domain-containing proteins coupled to outer nuclear membrane WIP proteins, the nucleoskeletal CRWN/LINC proteins, and, possibly, KAKU4. Binds to KAKU4. Expressed at low levels in roots, leaves, flowers and flower stalks.

Its subcellular location is the nucleus membrane. The protein localises to the nucleus. It is found in the nucleoplasm. It localises to the nucleus lamina. The protein resides in the cytoplasm. Component of SUN-protein-containing multivariate complexes also called LINC complexes which link the nucleoskeleton and cytoskeleton by providing versatile outer nuclear membrane attachment sites for cytoskeletal filaments. Required for nucleus structure organization (e.g. size and shape). Involved in the maintenance of interphase chromocenter integrity and organization. This chain is Protein CROWDED NUCLEI 4, found in Arabidopsis thaliana (Mouse-ear cress).